Consider the following 320-residue polypeptide: Tetraacyldisaccharide 4'-kinase (320 aa).

53–60 (SVGGNGKT) contributes to the ATP binding site.

Belongs to the LpxK family.

The catalysed reaction is a lipid A disaccharide + ATP = a lipid IVA + ADP + H(+). Its pathway is glycolipid biosynthesis; lipid IV(A) biosynthesis; lipid IV(A) from (3R)-3-hydroxytetradecanoyl-[acyl-carrier-protein] and UDP-N-acetyl-alpha-D-glucosamine: step 6/6. Its function is as follows. Transfers the gamma-phosphate of ATP to the 4'-position of a tetraacyldisaccharide 1-phosphate intermediate (termed DS-1-P) to form tetraacyldisaccharide 1,4'-bis-phosphate (lipid IVA). This Psychromonas ingrahamii (strain DSM 17664 / CCUG 51855 / 37) protein is Tetraacyldisaccharide 4'-kinase.